The primary structure comprises 531 residues: Laccase-4 (531 aa).

Positions 1-19 (MLSSITLLPLLAAVSTPAF) are cleaved as a signal peptide. Plastocyanin-like domains follow at residues 23-146 (RNYK…LVIY), 158-315 (VDDA…LHYE), and 384-507 (SLPT…VSSR). N66 carries N-linked (GlcNAc...) asparagine glycosylation. Positions 83 and 85 each coordinate Cu cation. Residues C104 and C528 are joined by a disulfide bond. N-linked (GlcNAc...) asparagine glycosylation occurs at N109. H128 and H130 together coordinate Cu cation. 4 N-linked (GlcNAc...) asparagine glycosylation sites follow: N186, N231, N280, and N395. Cu cation-binding residues include H427, H430, H432, H479, C480, and H481.

It belongs to the multicopper oxidase family. In terms of assembly, homodimer. It depends on Cu cation as a cofactor. In terms of tissue distribution, in mycelia, at a higher level than LCC1, LCC2 and LCC3.

It is found in the secreted. It carries out the reaction 4 hydroquinone + O2 = 4 benzosemiquinone + 2 H2O. In terms of biological role, lignin degradation and detoxification of lignin-derived products. The protein is Laccase-4 (LCC4) of Thanatephorus cucumeris (Black scurf of potato).